A 205-amino-acid chain; its full sequence is Urease accessory protein UreG (205 aa).

14–21 (GPVGSGKT) serves as a coordination point for GTP.

Belongs to the SIMIBI class G3E GTPase family. UreG subfamily. Homodimer. UreD, UreF and UreG form a complex that acts as a GTP-hydrolysis-dependent molecular chaperone, activating the urease apoprotein by helping to assemble the nickel containing metallocenter of UreC. The UreE protein probably delivers the nickel.

It is found in the cytoplasm. Functionally, facilitates the functional incorporation of the urease nickel metallocenter. This process requires GTP hydrolysis, probably effectuated by UreG. This Citrobacter koseri (strain ATCC BAA-895 / CDC 4225-83 / SGSC4696) protein is Urease accessory protein UreG.